Reading from the N-terminus, the 765-residue chain is Protein BCH2 (765 aa).

The segment at 1-31 is disordered; sequence MSFLWGSTKSKKGKNKKAAGSLPSGVVPQQR. The segment at 735–765 is CHS5-binding; it reads LECLSKNRNEACLAYERPLPDLPSTIKPLAD.

The protein belongs to the CHAPS family. Component of the CHS5/6 complex composed of the 4 CHAPS proteins BCH1, BCH2, BUD7, and CHS6 as well as at least CHS5 and GTP-bound ARF1. The complex interacts with the cargo protein CHS3.

It is found in the golgi apparatus. The protein localises to the trans-Golgi network membrane. Member of the CHS5-ARF1P-binding proteins (CHAPS) which mediates export of specific cargo proteins, including chitin synthase CHS3. The chain is Protein BCH2 (BCH2) from Saccharomyces cerevisiae (strain ATCC 204508 / S288c) (Baker's yeast).